Reading from the N-terminus, the 116-residue chain is Large ribosomal subunit protein bL17 (116 aa).

Belongs to the bacterial ribosomal protein bL17 family. In terms of assembly, part of the 50S ribosomal subunit. Contacts protein L32.

The chain is Large ribosomal subunit protein bL17 from Synechococcus sp. (strain JA-2-3B'a(2-13)) (Cyanobacteria bacterium Yellowstone B-Prime).